Consider the following 214-residue polypeptide: Metalloproteinase inhibitor 3 (214 aa).

A signal peptide spans 1–26; sequence MVFSTTAALSLLLALSSMQLSEVSEA. Zn(2+) is bound at residue cysteine 27. 2 involved in metalloproteinase-binding regions span residues 27-30 and 91-92; these read CTCM and ES. 6 disulfides stabilise this stretch: cysteine 27/cysteine 94, cysteine 29/cysteine 121, cysteine 39/cysteine 146, cysteine 148/cysteine 195, cysteine 153/cysteine 158, and cysteine 166/cysteine 187. Residues 27-146 enclose the NTR domain; that stretch reads CTCMPNHPQE…GLNHRYQYGC (120 aa). Asparagine 210 carries an N-linked (GlcNAc...) asparagine glycan.

This sequence belongs to the protease inhibitor I35 (TIMP) family. As to expression, expressed abundantly in brain and cartilage.

The protein localises to the secreted. It localises to the extracellular space. Its subcellular location is the extracellular matrix. Functionally, complexes with metalloproteinases (such as collagenases) and irreversibly inactivates them by binding to their catalytic zinc cofactor. May form part of a tissue-specific acute response to remodeling stimuli. This is Metalloproteinase inhibitor 3 (TIMP3) from Scyliorhinus torazame (Cloudy catshark).